The following is a 266-amino-acid chain: Derlin-1 (266 aa).

Residues 1-20 lie on the Cytoplasmic side of the membrane; the sequence is MSSPGEFYNSLPPITKAYGT. Residues 21–41 traverse the membrane as a helical segment; that stretch reads LCFFTTVATQLGLVAPVHIAL. Residues 42 to 55 lie on the Lumenal side of the membrane; that stretch reads IPELVLKQFQIWRL. Residues 56–76 form a helical membrane-spanning segment; that stretch reads ITNLFFLGGFSINFGIRLLMI. At 77–94 the chain is on the cytoplasmic side; it reads ARYGVQLEKGPFERRTAD. A helical membrane pass occupies residues 95-115; it reads FLWMMIFGSFTLLVLSVIPFF. The Lumenal segment spans residues 116–156; sequence WTPFLGVSLVFMLLYLWSREFPNANISLYGLVTLKAFYLPW. The chain crosses the membrane as a helical span at residues 157 to 177; sequence AMLALDVIFGSPIMPDLLGII. Residues 178-266 lie on the Cytoplasmic side of the membrane; sequence AGHLYYFLTV…FRGRSYRLTD (89 aa). The interval 235-266 is disordered; sequence GGVGGGGAYSSARAPPESSNTAFRGRSYRLTD.

It belongs to the derlin family.

Its subcellular location is the endoplasmic reticulum membrane. In terms of biological role, may be involved in the degradation process of specific misfolded endoplasmic reticulum (ER) luminal proteins. The chain is Derlin-1 (DER1) from Arabidopsis thaliana (Mouse-ear cress).